The sequence spans 257 residues: Type III pantothenate kinase (257 aa).

Residue 6–13 participates in ATP binding; the sequence is DAGNTNIV. Substrate contacts are provided by residues Tyr-100 and 107 to 110; that span reads GADR. The active-site Proton acceptor is the Asp-109. Asp-129 is a binding site for K(+). Thr-132 is a binding site for ATP. A substrate-binding site is contributed by Thr-184.

It belongs to the type III pantothenate kinase family. Homodimer. Requires NH4(+) as cofactor. K(+) is required as a cofactor.

Its subcellular location is the cytoplasm. The catalysed reaction is (R)-pantothenate + ATP = (R)-4'-phosphopantothenate + ADP + H(+). Its pathway is cofactor biosynthesis; coenzyme A biosynthesis; CoA from (R)-pantothenate: step 1/5. Its function is as follows. Catalyzes the phosphorylation of pantothenate (Pan), the first step in CoA biosynthesis. The sequence is that of Type III pantothenate kinase from Clostridium botulinum (strain Alaska E43 / Type E3).